We begin with the raw amino-acid sequence, 350 residues long: Histidinol-phosphate aminotransferase 1 (350 aa).

N6-(pyridoxal phosphate)lysine is present on lysine 209.

This sequence belongs to the class-II pyridoxal-phosphate-dependent aminotransferase family. Histidinol-phosphate aminotransferase subfamily. As to quaternary structure, homodimer. Requires pyridoxal 5'-phosphate as cofactor.

It carries out the reaction L-histidinol phosphate + 2-oxoglutarate = 3-(imidazol-4-yl)-2-oxopropyl phosphate + L-glutamate. The protein operates within amino-acid biosynthesis; L-histidine biosynthesis; L-histidine from 5-phospho-alpha-D-ribose 1-diphosphate: step 7/9. In Bradyrhizobium diazoefficiens (strain JCM 10833 / BCRC 13528 / IAM 13628 / NBRC 14792 / USDA 110), this protein is Histidinol-phosphate aminotransferase 1 (hisC1).